The chain runs to 384 residues: Cobalt-precorrin-5B C(1)-methyltransferase (384 aa).

Belongs to the CbiD family.

The catalysed reaction is Co-precorrin-5B + S-adenosyl-L-methionine = Co-precorrin-6A + S-adenosyl-L-homocysteine. It functions in the pathway cofactor biosynthesis; adenosylcobalamin biosynthesis; cob(II)yrinate a,c-diamide from sirohydrochlorin (anaerobic route): step 6/10. Functionally, catalyzes the methylation of C-1 in cobalt-precorrin-5B to form cobalt-precorrin-6A. The chain is Cobalt-precorrin-5B C(1)-methyltransferase from Ruminiclostridium cellulolyticum (strain ATCC 35319 / DSM 5812 / JCM 6584 / H10) (Clostridium cellulolyticum).